A 190-amino-acid chain; its full sequence is uncharacterized protein (190 aa).

Residues 1–55 lie on the Cytoplasmic side of the membrane; the sequence is MSRLRRFNRKILSLSSDYTHDGESDQEDVSILPLDTEEQEELIQKFETNAHITNK. Residues 56–76 traverse the membrane as a helical segment; sequence LYINLLSILYLLYGGLLMILV. At 77–80 the chain is on the extracellular side; it reads RKSR. A helical transmembrane segment spans residues 81 to 101; the sequence is GYIKLALLAGANSLICSCITL. Over 102 to 123 the chain is Cytoplasmic; the sequence is RYDIVNDYLLFKKFKLRVSNFS. A helical membrane pass occupies residues 124–144; it reads INIINIILLVLMAWISFNHVV. At 145–149 the chain is on the extracellular side; that stretch reads EDKKT. Residues 150–170 traverse the membrane as a helical segment; sequence VLCLQVPMFLFWVAVLVKRWA. Residues 171–190 are Cytoplasmic-facing; sequence RNIEDEIADLRCLKYKYKNA.

Its subcellular location is the membrane. This is an uncharacterized protein from Saccharomyces cerevisiae (strain ATCC 204508 / S288c) (Baker's yeast).